The following is a 362-amino-acid chain: Sphingolipid delta(4)-desaturase (362 aa).

A compositionally biased stretch (low complexity) spans 1–10 (MAESTATTTA). The segment at 1–20 (MAESTATTTAVPPPAEESWN) is disordered. The next 3 membrane-spanning stretches (helical) occupy residues 60–80 (PLTK…AYLL), 90–110 (FFLT…LAIH), and 121–143 (TLYN…AASF). Positions 110 to 114 (HELSH) match the Histidine box-1 motif. Residues 147-151 (HMEHH) carry the Histidine box-2 motif. Transmembrane regions (helical) follow at residues 169–189 (LILF…LLFY), 200–220 (PFTL…YLVV), and 228–248 (LAYF…AGHF). Residues 290–294 (HIEHH) carry the Histidine box-3 motif.

Belongs to the fatty acid desaturase type 1 family. DEGS subfamily.

The protein resides in the membrane. The catalysed reaction is an N-acylsphinganine + 2 Fe(II)-[cytochrome b5] + O2 + 2 H(+) = an N-acylsphing-4-enine + 2 Fe(III)-[cytochrome b5] + 2 H2O. The protein operates within lipid metabolism; sphingolipid metabolism. Delta(4)-fatty-acid desaturase which introduces a double bond at the 4-position in the long-chain base (LCB) of ceramides. Required for sphingosine biosynthesis. This is Sphingolipid delta(4)-desaturase (dsd1) from Schizosaccharomyces pombe (strain 972 / ATCC 24843) (Fission yeast).